Reading from the N-terminus, the 331-residue chain is Phenylalanine--tRNA ligase alpha subunit (331 aa).

Mg(2+) is bound at residue E258.

The protein belongs to the class-II aminoacyl-tRNA synthetase family. Phe-tRNA synthetase alpha subunit type 1 subfamily. Tetramer of two alpha and two beta subunits. Mg(2+) is required as a cofactor.

It localises to the cytoplasm. It carries out the reaction tRNA(Phe) + L-phenylalanine + ATP = L-phenylalanyl-tRNA(Phe) + AMP + diphosphate + H(+). The polypeptide is Phenylalanine--tRNA ligase alpha subunit (pheS) (Synechocystis sp. (strain ATCC 27184 / PCC 6803 / Kazusa)).